The sequence spans 533 residues: MSILALVEDRPTPREVYNWRVYLLAAVASFTSCMIGYDSAFIGTTLSLQSFQNEFNWESLNTDLISANIVSLYQAGAFFGALFAYPIGHFWGRRWGLMFSALIFFLGAGMMLGANGDRGLGLIYGGRVLAGIGVGAGSNICPIYISEMAPPAIRGRLVGVYELGWQIGGVVGFWINYGVDETLAPSHKQWIIPFAVQLIPAGLLIIGALLIRESPRWLFLRGNREKGIETLAWIRNLPADHIYMVEEINMIEQSLEQQRVKIGLGFWKPFKAAWTNKRILYRLFLGSMLFLWQNGSGINAINYYSPRVFKSIGVSGGNTSLLTTGIFGVVKAVITFVWLLYLIDHFGRRNLLLVGAAGGSVCLWIVGGYIKIAKPENNPEGTQLDSGGIAAIFFFYLWTAFYTPSWNGTPWVINSEMFDPTVRSLAQACAAASNWLWNFLISRFTPQMFTSMGYGVYFFFASLMILSIVFVFFLIPETKGVPLESMETLFDKKPVWHAHSQLIRELRENEEAFRADMGASGKGGVTKEYVEEA.

Residues 1 to 21 (MSILALVEDRPTPREVYNWRV) are Cytoplasmic-facing. The chain crosses the membrane as a helical span at residues 22-42 (YLLAAVASFTSCMIGYDSAFI). Residues 43–67 (GTTLSLQSFQNEFNWESLNTDLISA) are Extracellular-facing. Residues 68–88 (NIVSLYQAGAFFGALFAYPIG) traverse the membrane as a helical segment. The Cytoplasmic portion of the chain corresponds to 89–94 (HFWGRR). Residues 95-115 (WGLMFSALIFFLGAGMMLGAN) traverse the membrane as a helical segment. Over 116–127 (GDRGLGLIYGGR) the chain is Extracellular. A helical membrane pass occupies residues 128 to 148 (VLAGIGVGAGSNICPIYISEM). Residues 149–156 (APPAIRGR) are Cytoplasmic-facing. The helical transmembrane segment at 157–177 (LVGVYELGWQIGGVVGFWINY) threads the bilayer. At 178 to 191 (GVDETLAPSHKQWI) the chain is on the extracellular side. The chain crosses the membrane as a helical span at residues 192 to 212 (IPFAVQLIPAGLLIIGALLIR). Residues 213–282 (ESPRWLFLRG…AWTNKRILYR (70 aa)) lie on the Cytoplasmic side of the membrane. A helical transmembrane segment spans residues 283 to 303 (LFLGSMLFLWQNGSGINAINY). Over 304 to 324 (YSPRVFKSIGVSGGNTSLLTT) the chain is Extracellular. Residues 325 to 346 (GIFGVVKAVITFVWLLYLIDHF) form a helical membrane-spanning segment. The Cytoplasmic segment spans residues 347–349 (GRR). The helical transmembrane segment at 350–370 (NLLLVGAAGGSVCLWIVGGYI) threads the bilayer. Residues 371 to 385 (KIAKPENNPEGTQLD) are Extracellular-facing. The helical transmembrane segment at 386 to 406 (SGGIAAIFFFYLWTAFYTPSW) threads the bilayer. Topologically, residues 407 to 431 (NGTPWVINSEMFDPTVRSLAQACAA) are cytoplasmic. Residues 432 to 452 (ASNWLWNFLISRFTPQMFTSM) form a helical membrane-spanning segment. The Extracellular segment spans residues 453–454 (GY). A helical membrane pass occupies residues 455–475 (GVYFFFASLMILSIVFVFFLI). The Cytoplasmic segment spans residues 476 to 533 (PETKGVPLESMETLFDKKPVWHAHSQLIRELRENEEAFRADMGASGKGGVTKEYVEEA).

It belongs to the major facilitator superfamily. Sugar transporter (TC 2.A.1.1) family. Interacts with creB. Ubiquitinated. Deubiquitinated by creB, probably to control its activity or amount.

It localises to the cell membrane. Functionally, integral membrane transporter that imports quinic acid to be catabolized as a carbon source. The polypeptide is Quinate permease (qutD) (Emericella nidulans (strain FGSC A4 / ATCC 38163 / CBS 112.46 / NRRL 194 / M139) (Aspergillus nidulans)).